The sequence spans 286 residues: ATP synthase gamma chain (286 aa).

It belongs to the ATPase gamma chain family. F-type ATPases have 2 components, CF(1) - the catalytic core - and CF(0) - the membrane proton channel. CF(1) has five subunits: alpha(3), beta(3), gamma(1), delta(1), epsilon(1). CF(0) has three main subunits: a, b and c.

It localises to the cell inner membrane. Produces ATP from ADP in the presence of a proton gradient across the membrane. The gamma chain is believed to be important in regulating ATPase activity and the flow of protons through the CF(0) complex. In Alteromonas mediterranea (strain DSM 17117 / CIP 110805 / LMG 28347 / Deep ecotype), this protein is ATP synthase gamma chain.